The primary structure comprises 202 residues: Putative 3-methyladenine DNA glycosylase (202 aa).

Belongs to the DNA glycosylase MPG family.

In Staphylococcus aureus (strain Mu3 / ATCC 700698), this protein is Putative 3-methyladenine DNA glycosylase.